The chain runs to 121 residues: Heimdall profilin (121 aa).

It belongs to the Asgard profilin family.

It localises to the cytoplasm. It is found in the cytoskeleton. In terms of biological role, binds to actin and affects the structure of the cytoskeleton. At high concentrations inhibits spontaneous rabbit actin nucleation. This strongly suggests this archaea has a profilin-regulated actin system, and actin-type genes can be identified in this organism. The protein is Heimdall profilin of Heimdallarchaeota archaeon (strain LC_2).